The following is a 414-amino-acid chain: Protein ABHD18 (414 aa).

The signal sequence occupies residues M1 to G24. 2 N-linked (GlcNAc...) asparagine glycosylation sites follow: N282 and N307.

It belongs to the AB hydrolase superfamily.

The protein resides in the secreted. The chain is Protein ABHD18 from Homo sapiens (Human).